Here is an 897-residue protein sequence, read N- to C-terminus: uncharacterized protein (897 aa).

2 disordered regions span residues 25-89 (RLQD…TRKR) and 106-168 (PTRL…TPPS). Low complexity-rich tracts occupy residues 32–44 (SSSP…SSSS), 57–68 (SLQNSQSSSYSL), and 106–142 (PTRL…SSVS). In terms of domain architecture, Helicase ATP-binding spans 263–446 (SMEQSSKCGG…YSLLKFLRIK (184 aa)). 276–283 (DDMGLGKT) serves as a coordination point for ATP. The DEAH box signature appears at 397 to 400 (DEAH). The RING-type zinc finger occupies 606-655 (CSVCLDPCLAPVFIIPCGHFTCQECMSMLVGQKYGSSSTSTIIAKCPMCR). Residues 727 to 890 (QARQTILDII…LSRLDKEELL (164 aa)) form the Helicase C-terminal domain.

It belongs to the SNF2/RAD54 helicase family.

Its subcellular location is the cytoplasm. The protein localises to the nucleus. This is an uncharacterized protein from Schizosaccharomyces pombe (strain 972 / ATCC 24843) (Fission yeast).